The sequence spans 432 residues: Adenylosuccinate synthetase (432 aa).

GTP-binding positions include 13–19 and 41–43; these read GDEGKGK and GHT. The active-site Proton acceptor is the Asp-14. Residues Asp-14 and Gly-41 each coordinate Mg(2+). Residues 14–17, 39–42, Thr-130, Arg-144, Gln-225, Thr-240, and Arg-304 contribute to the IMP site; these read DEGK and NAGH. The active-site Proton donor is His-42. Substrate is bound at residue 300-306; the sequence is ATTGRRR. GTP contacts are provided by residues Arg-306, 332–334, and 415–417; these read KLD and STG.

Belongs to the adenylosuccinate synthetase family. In terms of assembly, homodimer. It depends on Mg(2+) as a cofactor.

Its subcellular location is the cytoplasm. It catalyses the reaction IMP + L-aspartate + GTP = N(6)-(1,2-dicarboxyethyl)-AMP + GDP + phosphate + 2 H(+). The protein operates within purine metabolism; AMP biosynthesis via de novo pathway; AMP from IMP: step 1/2. Functionally, plays an important role in the de novo pathway of purine nucleotide biosynthesis. Catalyzes the first committed step in the biosynthesis of AMP from IMP. The chain is Adenylosuccinate synthetase from Pectobacterium carotovorum subsp. carotovorum (strain PC1).